Here is a 122-residue protein sequence, read N- to C-terminus: MRKYETIFILQPDLAEDDVKSVTDKVQDVVASLKGDFHRLDDWGTRKLAYAIRKFPRGRYYYLRFDGGAQLVAELERRLRLDEKVLRFLSVNITDEPEKKVAERKPVIEAAEAPEAAEAAAE.

It belongs to the bacterial ribosomal protein bS6 family.

Binds together with bS18 to 16S ribosomal RNA. The protein is Small ribosomal subunit protein bS6 of Trichlorobacter lovleyi (strain ATCC BAA-1151 / DSM 17278 / SZ) (Geobacter lovleyi).